The following is a 465-amino-acid chain: GTPase Der (465 aa).

EngA-type G domains are found at residues 3–167 (PLVA…PEEG) and 179–352 (VRIA…ASAT). Residues 9-16 (GRPNVGKS), 57-61 (DTGGI), 119-122 (NKID), 185-192 (GRPNVGKS), 232-236 (DTAGL), and 297-300 (NKWD) contribute to the GTP site. Residues 353-437 (HEFSTSEVNQ…PVCFIFREGA (85 aa)) form the KH-like domain.

The protein belongs to the TRAFAC class TrmE-Era-EngA-EngB-Septin-like GTPase superfamily. EngA (Der) GTPase family. As to quaternary structure, associates with the 50S ribosomal subunit.

In terms of biological role, GTPase that plays an essential role in the late steps of ribosome biogenesis. This Xanthomonas oryzae pv. oryzae (strain MAFF 311018) protein is GTPase Der.